The chain runs to 118 residues: Non-specific lipid-transfer protein D (118 aa).

A signal peptide spans 1–25 (MAGLMKLACLIFACMIVAGPITSNA). Disulfide bonds link Cys-29-Cys-77, Cys-39-Cys-54, Cys-55-Cys-100, and Cys-75-Cys-114.

Belongs to the plant LTP family.

In terms of biological role, plant non-specific lipid-transfer proteins transfer phospholipids as well as galactolipids across membranes. May play a role in wax or cutin deposition in the cell walls of expanding epidermal cells and certain secretory tissues. This is Non-specific lipid-transfer protein D (WAX9D) from Brassica oleracea var. italica (Broccoli).